The following is a 50-amino-acid chain: Large ribosomal subunit protein bL33 (50 aa).

It belongs to the bacterial ribosomal protein bL33 family.

The chain is Large ribosomal subunit protein bL33 from Koribacter versatilis (strain Ellin345).